Reading from the N-terminus, the 274-residue chain is Adenosylcobinamide-GDP ribazoletransferase (274 aa).

The next 7 membrane-spanning stretches (helical) occupy residues 46–66 (VMAS…AIAF), 69–89 (TSLG…WELF), 117–137 (IIAD…SILI), 151–173 (WWMV…HSRL), 192–212 (HTII…PLAM), 216–236 (ELIT…LVEI), and 253–273 (FIMH…VGIV).

The protein belongs to the CobS family. Mg(2+) serves as cofactor.

The protein localises to the cell membrane. It carries out the reaction alpha-ribazole + adenosylcob(III)inamide-GDP = adenosylcob(III)alamin + GMP + H(+). The catalysed reaction is alpha-ribazole 5'-phosphate + adenosylcob(III)inamide-GDP = adenosylcob(III)alamin 5'-phosphate + GMP + H(+). It functions in the pathway cofactor biosynthesis; adenosylcobalamin biosynthesis; adenosylcobalamin from cob(II)yrinate a,c-diamide: step 7/7. Joins adenosylcobinamide-GDP and alpha-ribazole to generate adenosylcobalamin (Ado-cobalamin). Also synthesizes adenosylcobalamin 5'-phosphate from adenosylcobinamide-GDP and alpha-ribazole 5'-phosphate. The chain is Adenosylcobinamide-GDP ribazoletransferase from Corynebacterium diphtheriae (strain ATCC 700971 / NCTC 13129 / Biotype gravis).